Reading from the N-terminus, the 218-residue chain is Peptidyl-prolyl cis-trans isomerase FKBP7 (218 aa).

The first 19 residues, 1 to 19 (MNLLFRLAVFLSLWCCSDA), serve as a signal peptide directing secretion. Asparagine 41 and asparagine 128 each carry an N-linked (GlcNAc...) asparagine glycan. The PPIase FKBP-type domain maps to 49 to 141 (GDLLNAHYDG…MFEIELYAVT (93 aa)). 2 consecutive EF-hand domains span residues 141 to 176 (TKGP…DFEK) and 185 to 218 (YQKA…HDEL). Ca(2+)-binding residues include aspartate 154, aspartate 156, aspartate 158, glutamine 160, glutamate 165, aspartate 198, asparagine 200, aspartate 202, and glutamate 209. The disordered stretch occupies residues 197 to 218 (NDHNGDGFISPKEYNVHQHDEL). The Prevents secretion from ER signature appears at 215–218 (HDEL).

Post-translationally, glycosylated. Expressed at highest levels in heart, lung and testis. Weakly expressed in kidney and lymph node. Little or no expression detected in brain, thymus, spleen and liver.

The protein resides in the endoplasmic reticulum lumen. It catalyses the reaction [protein]-peptidylproline (omega=180) = [protein]-peptidylproline (omega=0). In terms of biological role, PPIases accelerate the folding of proteins during protein synthesis. This is Peptidyl-prolyl cis-trans isomerase FKBP7 (Fkbp7) from Mus musculus (Mouse).